A 179-amino-acid chain; its full sequence is Ribosome maturation factor RimM (179 aa).

One can recognise a PRC barrel domain in the interval 103–176 (EPDTYYDHQL…IVEIDPPKGL (74 aa)).

Belongs to the RimM family. As to quaternary structure, binds ribosomal protein uS19.

It localises to the cytoplasm. In terms of biological role, an accessory protein needed during the final step in the assembly of 30S ribosomal subunit, possibly for assembly of the head region. Essential for efficient processing of 16S rRNA. May be needed both before and after RbfA during the maturation of 16S rRNA. It has affinity for free ribosomal 30S subunits but not for 70S ribosomes. This chain is Ribosome maturation factor RimM, found in Mycobacterium leprae (strain Br4923).